A 369-amino-acid chain; its full sequence is Anhydro-N-acetylmuramic acid kinase (369 aa).

ATP is bound at residue 12–19; it reads GTSLDGVD.

It belongs to the anhydro-N-acetylmuramic acid kinase family.

It carries out the reaction 1,6-anhydro-N-acetyl-beta-muramate + ATP + H2O = N-acetyl-D-muramate 6-phosphate + ADP + H(+). It participates in amino-sugar metabolism; 1,6-anhydro-N-acetylmuramate degradation. It functions in the pathway cell wall biogenesis; peptidoglycan recycling. Its function is as follows. Catalyzes the specific phosphorylation of 1,6-anhydro-N-acetylmuramic acid (anhMurNAc) with the simultaneous cleavage of the 1,6-anhydro ring, generating MurNAc-6-P. Is required for the utilization of anhMurNAc either imported from the medium or derived from its own cell wall murein, and thus plays a role in cell wall recycling. This Escherichia coli (strain SMS-3-5 / SECEC) protein is Anhydro-N-acetylmuramic acid kinase.